A 244-amino-acid chain; its full sequence is Krueppel-like factor 9 (244 aa).

A disordered region spans residues 80 to 142; sequence SVCSDSLESP…AKGKHASEKR (63 aa). A Phosphoserine modification is found at S122. C2H2-type zinc fingers lie at residues 143-167, 173-197, and 203-225; these read HKCP…YRVH, FPCT…YRTH, and FRCP…ARRH.

It belongs to the Sp1 C2H2-type zinc-finger protein family. As to quaternary structure, interacts with ZZEF1. Epidermis (at protein level).

Its subcellular location is the nucleus. Transcription factor that binds to GC box promoter elements. Selectively activates mRNA synthesis from genes containing tandem repeats of GC boxes but represses genes with a single GC box. Acts as an epidermal circadian transcription factor regulating keratinocyte proliferation. The protein is Krueppel-like factor 9 (KLF9) of Homo sapiens (Human).